The sequence spans 881 residues: Alanine--tRNA ligase (881 aa).

Residues H564, H568, C666, and H670 each contribute to the Zn(2+) site.

Belongs to the class-II aminoacyl-tRNA synthetase family. It depends on Zn(2+) as a cofactor.

Its subcellular location is the cytoplasm. It carries out the reaction tRNA(Ala) + L-alanine + ATP = L-alanyl-tRNA(Ala) + AMP + diphosphate. Catalyzes the attachment of alanine to tRNA(Ala) in a two-step reaction: alanine is first activated by ATP to form Ala-AMP and then transferred to the acceptor end of tRNA(Ala). Also edits incorrectly charged Ser-tRNA(Ala) and Gly-tRNA(Ala) via its editing domain. The polypeptide is Alanine--tRNA ligase (Caldicellulosiruptor saccharolyticus (strain ATCC 43494 / DSM 8903 / Tp8T 6331)).